The chain runs to 216 residues: Cytidylate kinase (216 aa).

7 to 15 (GPSGTGKST) serves as a coordination point for ATP.

This sequence belongs to the cytidylate kinase family. Type 1 subfamily.

The protein resides in the cytoplasm. The enzyme catalyses CMP + ATP = CDP + ADP. The catalysed reaction is dCMP + ATP = dCDP + ADP. In Chlamydia caviae (strain ATCC VR-813 / DSM 19441 / 03DC25 / GPIC) (Chlamydophila caviae), this protein is Cytidylate kinase.